Here is a 101-residue protein sequence, read N- to C-terminus: Small ribosomal subunit protein uS14 (101 aa).

It belongs to the universal ribosomal protein uS14 family. In terms of assembly, part of the 30S ribosomal subunit. Contacts proteins S3 and S10.

Its function is as follows. Binds 16S rRNA, required for the assembly of 30S particles and may also be responsible for determining the conformation of the 16S rRNA at the A site. The sequence is that of Small ribosomal subunit protein uS14 from Paraburkholderia phytofirmans (strain DSM 17436 / LMG 22146 / PsJN) (Burkholderia phytofirmans).